A 228-amino-acid polypeptide reads, in one-letter code: MPKLILCRHGQSEWNAKNLFTGWEDVQLSEQGRNEAITSGRKLKENGIEIDVAFTSLLTRALETTQFLLAESDQEWIPVHKSWRLNERHYGKLQGLNKDEARKEFGEEQVHQWRRSYDVKPPAQTEEQRESYLKDRRYRHLDHRMMPYSESLKTTLERVVPIWTDKISQHLLDGETVLVAAHGNSIRALIKYLDNVSDEDIIGYEIKTGAPLIYELDDNLNVIDHYYL.

Substrate is bound by residues 8–15 (RHGQSEWN), 21–22 (TG), Arg60, 87–90 (ERHY), Lys98, 114–115 (RR), and 183–184 (GN). Residue His9 is the Tele-phosphohistidine intermediate of the active site. The active-site Proton donor/acceptor is the Glu87.

Belongs to the phosphoglycerate mutase family. BPG-dependent PGAM subfamily.

The enzyme catalyses (2R)-2-phosphoglycerate = (2R)-3-phosphoglycerate. Its pathway is carbohydrate degradation; glycolysis; pyruvate from D-glyceraldehyde 3-phosphate: step 3/5. Its function is as follows. Catalyzes the interconversion of 2-phosphoglycerate and 3-phosphoglycerate. The polypeptide is 2,3-bisphosphoglycerate-dependent phosphoglycerate mutase (Staphylococcus haemolyticus (strain JCSC1435)).